Reading from the N-terminus, the 250-residue chain is Ubiquinone/menaquinone biosynthesis C-methyltransferase UbiE (250 aa).

Residues T73, D94, 122–123 (NA), and S139 each bind S-adenosyl-L-methionine.

This sequence belongs to the class I-like SAM-binding methyltransferase superfamily. MenG/UbiE family.

The enzyme catalyses a 2-demethylmenaquinol + S-adenosyl-L-methionine = a menaquinol + S-adenosyl-L-homocysteine + H(+). It catalyses the reaction a 2-methoxy-6-(all-trans-polyprenyl)benzene-1,4-diol + S-adenosyl-L-methionine = a 5-methoxy-2-methyl-3-(all-trans-polyprenyl)benzene-1,4-diol + S-adenosyl-L-homocysteine + H(+). The protein operates within quinol/quinone metabolism; menaquinone biosynthesis; menaquinol from 1,4-dihydroxy-2-naphthoate: step 2/2. It participates in cofactor biosynthesis; ubiquinone biosynthesis. Its function is as follows. Methyltransferase required for the conversion of demethylmenaquinol (DMKH2) to menaquinol (MKH2) and the conversion of 2-polyprenyl-6-methoxy-1,4-benzoquinol (DDMQH2) to 2-polyprenyl-3-methyl-6-methoxy-1,4-benzoquinol (DMQH2). In Francisella tularensis subsp. tularensis (strain FSC 198), this protein is Ubiquinone/menaquinone biosynthesis C-methyltransferase UbiE.